We begin with the raw amino-acid sequence, 137 residues long: Putative pre-16S rRNA nuclease (137 aa).

Belongs to the YqgF nuclease family.

It is found in the cytoplasm. Functionally, could be a nuclease involved in processing of the 5'-end of pre-16S rRNA. The chain is Putative pre-16S rRNA nuclease from Mycoplasmopsis synoviae (strain 53) (Mycoplasma synoviae).